We begin with the raw amino-acid sequence, 383 residues long: Succinyl-diaminopimelate desuccinylase (383 aa).

Histidine 74 lines the Zn(2+) pocket. Aspartate 76 is a catalytic residue. Residue aspartate 107 participates in Zn(2+) binding. The active-site Proton acceptor is the glutamate 141. 3 residues coordinate Zn(2+): glutamate 142, glutamate 170, and histidine 356.

It belongs to the peptidase M20A family. DapE subfamily. As to quaternary structure, homodimer. The cofactor is Zn(2+). Co(2+) serves as cofactor.

It catalyses the reaction N-succinyl-(2S,6S)-2,6-diaminopimelate + H2O = (2S,6S)-2,6-diaminopimelate + succinate. It functions in the pathway amino-acid biosynthesis; L-lysine biosynthesis via DAP pathway; LL-2,6-diaminopimelate from (S)-tetrahydrodipicolinate (succinylase route): step 3/3. In terms of biological role, catalyzes the hydrolysis of N-succinyl-L,L-diaminopimelic acid (SDAP), forming succinate and LL-2,6-diaminopimelate (DAP), an intermediate involved in the bacterial biosynthesis of lysine and meso-diaminopimelic acid, an essential component of bacterial cell walls. In Ralstonia nicotianae (strain ATCC BAA-1114 / GMI1000) (Ralstonia solanacearum), this protein is Succinyl-diaminopimelate desuccinylase.